Here is a 98-residue protein sequence, read N- to C-terminus: Hainantoxin-XVII-2 (98 aa).

The signal sequence occupies residues 1 to 40 (MTTVGVSLFRRSPEKITMKIATFLGLSFLLIASYVLICEA). A propeptide spanning residues 41–64 (QHPGFQELLILEENMRDPENSKER) is cleaved from the precursor. 2 cysteine pairs are disulfide-bonded: C66-C81 and C73-C85.

The protein belongs to the hainantoxin family. 17 subfamily. In terms of tissue distribution, expressed by the venom gland.

The protein localises to the secreted. In terms of biological role, putative ion channel inhibitor. This is Hainantoxin-XVII-2 from Cyriopagopus hainanus (Chinese bird spider).